Here is a 483-residue protein sequence, read N- to C-terminus: Probable cytochrome P450 517A4 (483 aa).

The helical transmembrane segment at Met1–Lys21 threads the bilayer. Cys429 lines the heme pocket.

This sequence belongs to the cytochrome P450 family. The cofactor is heme.

Its subcellular location is the membrane. The protein is Probable cytochrome P450 517A4 (cyp517A4) of Dictyostelium discoideum (Social amoeba).